Here is a 436-residue protein sequence, read N- to C-terminus: MFDSTLNPLWQRYILAVQEEVKPALGCTEPISLALAAAVAAAELEGPVERVEAWVSPNLMKNGLGVTVPGTGMVGLPIAAALGALGGNANAGLEVLKDATAQAIADAKALLAAGKVSVKIQEPCNEILFSRAKVWNGEKWACVTIVGGHTNIVHIETHNSVVFTQQACVAEGEQESPLTVLSRTTLAEILKFVNEVPFAAIRFILDSAKLNCALSQEGLSGKWGLHIGATLEKQCERGLLAKDLSSSIVIRTSAASDARMGGATLPAMSNSGSGNQGITATMSVVVVAEHFGADDERLARALMLSHLSAIYIHNQLPRLSALCAATTAAMGAAAGMAWLVDGRYETISMAISSMIGDVSGMICDGASNSCAMKVSTSASAAWKAVLMALDDTAVTGNEGIVAHDVEQSIANLCALASHSMQQTDRQIIEIMASKAR.

The protein belongs to the UPF0597 family.

The chain is UPF0597 protein YhaM from Shigella boydii serotype 18 (strain CDC 3083-94 / BS512).